The following is a 72-amino-acid chain: Penaeidin-2b (72 aa).

Positions 1–21 (MRLVVCLVFLASFALVCQGEA) are cleaved as a signal peptide. 3 disulfide bridges follow: Cys-45-Cys-59, Cys-48-Cys-66, and Cys-60-Cys-67. The residue at position 71 (Lys-71) is a Lysine amide.

Belongs to the penaeidin family.

The protein resides in the cytoplasmic granule. Functionally, antibacterial and antifungal activity. Presents chitin-binding activity. The chain is Penaeidin-2b from Penaeus vannamei (Whiteleg shrimp).